A 213-amino-acid chain; its full sequence is Protein Flattop (213 aa).

A disordered region spans residues 127-213 (VDQPAEQSKI…HNSRPASQEK (87 aa)). Residues 151-213 (QHIQDQSRPA…HNSRPASQEK (63 aa)) show a composition bias toward polar residues.

Belongs to the Flattop family.

The protein resides in the cytoplasm. Its subcellular location is the cytoskeleton. The protein localises to the cilium basal body. It localises to the cell projection. It is found in the cilium. The protein resides in the apical cell membrane. Its subcellular location is the cilium axoneme. Microtubule inner protein (MIP) part of the dynein-decorated doublet microtubules (DMTs) in cilia axoneme. Acts as a regulator of cilium basal body docking and positioning in mono- and multiciliated cells. Regulates basal body docking and cilia formation in multiciliated lung cells. Regulates kinocilium positioning and stereocilia bundle morphogenesis in the inner ear. This chain is Protein Flattop, found in Danio rerio (Zebrafish).